The following is a 443-amino-acid chain: Ribosomal protein uS12 methylthiotransferase RimO (443 aa).

The MTTase N-terminal domain maps to 5–115; sequence PNIGFISLGC…VMKHVHKYVP (111 aa). [4Fe-4S] cluster is bound by residues cysteine 14, cysteine 50, cysteine 79, cysteine 147, cysteine 151, and cysteine 154. One can recognise a Radical SAM core domain in the interval 133–374; that stretch reads LTPKHYAYLK…MQLQQKISAE (242 aa). Residues 377–443 enclose the TRAM domain; that stretch reads RQKIGRTLSV…ADEYDLWGEI (67 aa).

Belongs to the methylthiotransferase family. RimO subfamily. It depends on [4Fe-4S] cluster as a cofactor.

Its subcellular location is the cytoplasm. The enzyme catalyses L-aspartate(89)-[ribosomal protein uS12]-hydrogen + (sulfur carrier)-SH + AH2 + 2 S-adenosyl-L-methionine = 3-methylsulfanyl-L-aspartate(89)-[ribosomal protein uS12]-hydrogen + (sulfur carrier)-H + 5'-deoxyadenosine + L-methionine + A + S-adenosyl-L-homocysteine + 2 H(+). Catalyzes the methylthiolation of an aspartic acid residue of ribosomal protein uS12. This chain is Ribosomal protein uS12 methylthiotransferase RimO, found in Histophilus somni (strain 2336) (Haemophilus somnus).